A 443-amino-acid chain; its full sequence is Trigger factor (443 aa).

The PPIase FKBP-type domain occupies 163-249 (KDAAIIDYQA…LKSLKEEILP (87 aa)).

Belongs to the FKBP-type PPIase family. Tig subfamily.

It is found in the cytoplasm. It carries out the reaction [protein]-peptidylproline (omega=180) = [protein]-peptidylproline (omega=0). Functionally, involved in protein export. Acts as a chaperone by maintaining the newly synthesized protein in an open conformation. Functions as a peptidyl-prolyl cis-trans isomerase. This is Trigger factor from Desulfosudis oleivorans (strain DSM 6200 / JCM 39069 / Hxd3) (Desulfococcus oleovorans).